A 75-amino-acid polypeptide reads, in one-letter code: uncharacterized protein (75 aa).

A helical transmembrane segment spans residues 4–26 (PSLLFLGFSGVLAFGEVGWVGVY).

It localises to the membrane. This is an uncharacterized protein from Treponema pallidum (strain Nichols).